A 528-amino-acid polypeptide reads, in one-letter code: Low affinity inorganic phosphate transporter 4 (528 aa).

Topologically, residues 1 to 18 (MALEVLEALDSARTQWYH) are cytoplasmic. The helical transmembrane segment at 19 to 39 (VTAIVIAGMGFFTDAYDLFCI) threads the bilayer. Topologically, residues 40–68 (TTVSKLLGRLYYFDPSTGKPGKLPNNVNN) are extracellular. Residues 69-89 (LVTGVALVGTLSGQLFFGYLG) form a helical membrane-spanning segment. At 90-96 (DKLGRKK) the chain is on the cytoplasmic side. A helical transmembrane segment spans residues 97 to 117 (VYGVTLILMVACAICSGLSFG). Topologically, residues 118–122 (ASAKS) are extracellular. Residues 123 to 143 (VMGTLCFFRFWLGFGIGGDYP) traverse the membrane as a helical segment. Residues 144 to 158 (LSATIMSEYANKRTR) are Cytoplasmic-facing. Residues 159–179 (GAFIAAVFAMQGVGIIFAGLV) form a helical membrane-spanning segment. Residues 180 to 208 (SMCLSAGFKASYHAPSFHDDPIMSTQPQG) are Extracellular-facing. The helical transmembrane segment at 209–229 (DLMWRLVLMIGAVPAAMTYYW) threads the bilayer. Over 230–292 (RMKMPETGRY…NEFFTRHGRH (63 aa)) the chain is Cytoplasmic. A helical transmembrane segment spans residues 293-313 (LIGTMTSWFLLDIAFYSQNLT). Over 314-341 (QKDIFPAMGLIDKDFEMNAIQEVFETSR) the chain is Extracellular. A helical membrane pass occupies residues 342 to 362 (AMFVIALFGTFPGYWFTVFFI). The Cytoplasmic segment spans residues 363-371 (EKLGRYKIQ). Residues 372 to 392 (LIGFFMMSVFMFIIGVKYDYL) traverse the membrane as a helical segment. Over 393–401 (RNENSHMFA) the chain is Extracellular. Residues 402 to 422 (LLYGLTFFFANFGPNSTTFVL) form a helical membrane-spanning segment. At 423-433 (PAELFPTRVRS) the chain is on the cytoplasmic side. Residues 434–454 (TCHALSAAAGKAGAMVGAFGI) form a helical membrane-spanning segment. The Extracellular portion of the chain corresponds to 455 to 467 (QNYTQKGEQKQIK). An N-linked (GlcNAc...) asparagine glycan is attached at asparagine 456. The chain crosses the membrane as a helical span at residues 468–488 (HAMMILAVTNLIGFFCSFLVT). At 489-528 (ETKGRSLEEISGEDGRESELTPTPPNNRVPTRQEPRSETM) the chain is on the cytoplasmic side. Composition is skewed to basic and acidic residues over residues 496–507 (EEISGEDGRESE) and 519–528 (TRQEPRSETM). The segment at 496 to 528 (EEISGEDGRESELTPTPPNNRVPTRQEPRSETM) is disordered.

Belongs to the major facilitator superfamily. Phosphate:H(+) symporter (TC 2.A.1.9) family. Expressed only in mycorrhizal roots, exclusively in cortical cells containing arbuscules, upon arbuscular mycorrhizal (AM) symbiosis with AM fungi (e.g. Gigaspora margarita and Funnelliformis mosseae). Also observed in root tips of non-mycorrhizal roots, in a phosphate (Pi) depended-manner, highest expression levels being observed in low Pi conditions.

The protein resides in the cell membrane. It catalyses the reaction phosphate(in) + H(+)(in) = phosphate(out) + H(+)(out). Its function is as follows. Low-affinity transporter for external inorganic phosphate (Pi) probably involved in the acquisition of phosphate released by arbuscular mycorrhizal (AM) fungi (e.g. Gigaspora margarita and Funnelliformis mosseae) during AM symbiosis; required for propper mycorrhizal arbuscule morphology. Acts as a Pi-sensing machinery at the root tip level, independently of AM fungi, involved in the regulation of early root branching and lateral roots formation. The protein is Low affinity inorganic phosphate transporter 4 of Lotus japonicus (Lotus corniculatus var. japonicus).